The chain runs to 431 residues: Histidinol dehydrogenase (431 aa).

NAD(+) contacts are provided by tyrosine 127, glutamine 185, and asparagine 208. The substrate site is built by serine 234, glutamine 256, and histidine 259. Zn(2+) contacts are provided by glutamine 256 and histidine 259. Active-site proton acceptor residues include glutamate 323 and histidine 324. 4 residues coordinate substrate: histidine 324, aspartate 357, glutamate 411, and histidine 416. Position 357 (aspartate 357) interacts with Zn(2+). Position 416 (histidine 416) interacts with Zn(2+).

The protein belongs to the histidinol dehydrogenase family. Zn(2+) is required as a cofactor.

It carries out the reaction L-histidinol + 2 NAD(+) + H2O = L-histidine + 2 NADH + 3 H(+). The protein operates within amino-acid biosynthesis; L-histidine biosynthesis; L-histidine from 5-phospho-alpha-D-ribose 1-diphosphate: step 9/9. In terms of biological role, catalyzes the sequential NAD-dependent oxidations of L-histidinol to L-histidinaldehyde and then to L-histidine. The sequence is that of Histidinol dehydrogenase from Vibrio parahaemolyticus serotype O3:K6 (strain RIMD 2210633).